A 468-amino-acid chain; its full sequence is UDP-N-acetylmuramate--L-alanine ligase (468 aa).

Position 121–127 (121–127 (GSHGKTT)) interacts with ATP.

Belongs to the MurCDEF family.

Its subcellular location is the cytoplasm. It catalyses the reaction UDP-N-acetyl-alpha-D-muramate + L-alanine + ATP = UDP-N-acetyl-alpha-D-muramoyl-L-alanine + ADP + phosphate + H(+). The protein operates within cell wall biogenesis; peptidoglycan biosynthesis. Functionally, cell wall formation. In Borreliella afzelii (strain PKo) (Borrelia afzelii), this protein is UDP-N-acetylmuramate--L-alanine ligase.